The chain runs to 307 residues: Elongation factor Ts (307 aa).

The interval Thr80 to Val83 is involved in Mg(2+) ion dislocation from EF-Tu.

The protein belongs to the EF-Ts family.

It localises to the cytoplasm. Functionally, associates with the EF-Tu.GDP complex and induces the exchange of GDP to GTP. It remains bound to the aminoacyl-tRNA.EF-Tu.GTP complex up to the GTP hydrolysis stage on the ribosome. The polypeptide is Elongation factor Ts (Bradyrhizobium sp. (strain ORS 278)).